We begin with the raw amino-acid sequence, 83 residues long: uncharacterized protein (83 aa).

The chain crosses the membrane as a helical span at residues 50–70; it reads IMVFLGEAWIILIPFAIFCII.

This sequence belongs to the plectrovirus ORF7 family.

The protein localises to the host membrane. This is an uncharacterized protein from Spiroplasma citri (SpV1).